A 188-amino-acid chain; its full sequence is Trafficking protein particle complex subunit 5 (188 aa).

Position 10 is a phosphoserine (Ser10).

The protein belongs to the TRAPP small subunits family. BET3 subfamily. In terms of assembly, component of the multisubunit TRAPP (transport protein particle) complex, which includes at least TRAPPC2, TRAPPC2L, TRAPPC3, TRAPPC3L, TRAPPC4, TRAPPC5, TRAPPC8, TRAPPC9, TRAPPC10, TRAPPC11 and TRAPPC12.

The protein localises to the golgi apparatus. It localises to the cis-Golgi network. The protein resides in the endoplasmic reticulum. In terms of biological role, may play a role in vesicular transport from endoplasmic reticulum to Golgi. The chain is Trafficking protein particle complex subunit 5 (TRAPPC5) from Homo sapiens (Human).